A 494-amino-acid polypeptide reads, in one-letter code: Aspartyl/glutamyl-tRNA(Asn/Gln) amidotransferase subunit B (494 aa).

It belongs to the GatB/GatE family. GatB subfamily. As to quaternary structure, heterotrimer of A, B and C subunits.

It carries out the reaction L-glutamyl-tRNA(Gln) + L-glutamine + ATP + H2O = L-glutaminyl-tRNA(Gln) + L-glutamate + ADP + phosphate + H(+). It catalyses the reaction L-aspartyl-tRNA(Asn) + L-glutamine + ATP + H2O = L-asparaginyl-tRNA(Asn) + L-glutamate + ADP + phosphate + 2 H(+). In terms of biological role, allows the formation of correctly charged Asn-tRNA(Asn) or Gln-tRNA(Gln) through the transamidation of misacylated Asp-tRNA(Asn) or Glu-tRNA(Gln) in organisms which lack either or both of asparaginyl-tRNA or glutaminyl-tRNA synthetases. The reaction takes place in the presence of glutamine and ATP through an activated phospho-Asp-tRNA(Asn) or phospho-Glu-tRNA(Gln). The protein is Aspartyl/glutamyl-tRNA(Asn/Gln) amidotransferase subunit B of Rhodopseudomonas palustris (strain BisA53).